Reading from the N-terminus, the 1023-residue chain is MNFIKENSQALIQRMGIVVIKQICDDLFALNVLNGEEVAIICSHRVEQDAARDIVHMILKKGSAACNLFLKSLENWNYPVYQDLTGHSLFHQNLEEDLDVLAQSLKDLYNSPVFKNFFPLGEDIDIIFNLQITFTEPVLWRKDHRHHRVEQMTLGSLLEALKSPCLIEGESGKGKSTLLQKIAMLWASGMCPALNQFKLVFFIRLSSARGGLFETLYDQLVNIPDSISKPTFRALLLKLHKKVLFLLDAYNEFHPQNCPEIEALVKENHRFKNMVIVTTTTECLRHIRHVGALTVEVGDMTEDSARVLIREVLINELAEGLLFQMQESRCLRNLMRTPLFVVITCAIQMGSEEFQAHTQTMLFQTFYDLLIQKNRRRHSGGTSGDFVRSLDYCGDLALEGVFSHKFDFELEDVCSMNEDVLVRTGLLCKYTAQRLRPTYKFFHKSFQEYTAGRRLSSLLKSREPEEVSKGNSYLKKMVSISDITSLYGNLLLYTCGSSTEATRAIMRHLAMVCEHGSLQGLSVTKRPLWRQESIQNLRNTTEQDVLKAINVNSFVECGINLFSESISKSELSQEFEAFFQGKSLYINSENIPDYLFDFFKYLPNCVSALDFVKLDFYGRATVSQDKTGENSSGVHTEGPSTYIPSRAVSLFFNWMQKFKTLEVTLRDISKLNKQDIKYLGKIFSSASNLKLYIKRCAAVAGRLSSVLRTCKNIHSLMVEASPLTTEDEQYITSVTDLQNLSIHDLHTQRLPGGLADSLGNLKNLLKLILDDIRLNEEDAKSLAEGLRNLKKMRLLHLTRLSDMGEGMDYIVKSLSEEPCDLQEMKLVDCCLTANSLKILAQNLHNLVKLSVLDMSENYLEKAGSEALQGLIGRLGVLEQLSALMLPWCWDAYISLPNLLKQLEGTPGLVKLGLKNWRLRDEEIRSFGEFLEMNPLRDLQQLDLAGHGVSSDGWLSFMDVFENLKQLVFFDFGTEEFLPDAALVRKLGQVLSKLTLLQEARLTGWELDDYDISVIKGTFKLVTA.

In terms of domain architecture, CARD spans 1–88; sequence MNFIKENSQA…PVYQDLTGHS (88 aa). A nucleotide-binding domain (NBD) region spans residues 95 to 298; the sequence is EEDLDVLAQS…HVGALTVEVG (204 aa). The 314-residue stretch at 163–476 folds into the NACHT domain; the sequence is SPCLIEGESG…VSKGNSYLKK (314 aa). 169 to 176 contacts ATP; that stretch reads GESGKGKS. The segment at 356 to 463 is winged-helix domain (WHD); that stretch reads AHTQTMLFQT…RLSSLLKSRE (108 aa). Ser-533 carries the post-translational modification Phosphoserine. LRR repeat units lie at residues 578–598, 655–678, 734–757, 761–784, 786–811, 823–846, 847–869, 877–901, 910–932, 935–962, 964–984, and 998–1020; these read FFQGKSLYINSENIPDYLFDF, MQKFKTLEVTLRDISKLNKQDIKY, VTDLQNLSIHDLHTQRLPGGLADS, LKNLLKLILDDIRLNEEDAKSLAE, LRNLKKMRLLHLTRLSDMGEGMDYIV, EMKLVDCCLTANSLKILAQNLHNL, VKLSVLDMSENYLEKAGSEALQG, LEQLSALMLPWCWDAYISLPNLLKQ, KLGLKNWRLRDEEIRSFGEFLEM, LRDLQQLDLAGHGVSSDGWLSFMDVFEN, KQLVFFDFGTEEFLPDAALVR, and EARLTGWELDDYDISVIKGTFKL.

As to quaternary structure, homooligomer; homooligomerizes following activation of Naip proteins by pathogenic proteins such as S.typhimurium (Salmonella) flagellin or PrgJ. Component of the NLRC4 inflammasome, at least composed of NLRC4, caspase-1 (CASP1) and some NAIP family member. Interacts with EIF2AK2/PKR. Phosphorylated at Ser-533 following infection of macrophages with S.typhimurium (Salmonella). Phosphorylation is essential for NLRC4 inflammasome function to promote caspase-1 activation and pyroptosis. PRKCD phosphorylates Ser-533 in vitro.

The protein resides in the cytoplasm. Its subcellular location is the cytosol. Key component of inflammasomes that indirectly senses specific proteins from pathogenic bacteria and fungi and responds by assembling an inflammasome complex that promotes caspase-1 activation, cytokine production and macrophage pyroptosis. The NLRC4 inflammasome is activated as part of the innate immune response to a range of intracellular bacteria. The polypeptide is NLR family CARD domain-containing protein 4 (Nlrc4) (Rattus norvegicus (Rat)).